The following is a 356-amino-acid chain: Holliday junction branch migration complex subunit RuvB (356 aa).

The segment at 4–191 (TDKLATEQRI…FGIVARLEFY (188 aa)) is large ATPase domain (RuvB-L). Residues L30, R31, G72, K75, T76, T77, 138 to 140 (EDY), R181, Y191, and R228 contribute to the ATP site. Residue T76 participates in Mg(2+) binding. Residues 192-262 (DAEQLSRIVR…VADAALAMLD (71 aa)) form a small ATPAse domain (RuvB-S) region. A head domain (RuvB-H) region spans residues 265 to 356 (PVGFDLMDRK…RDEWDTPDGK (92 aa)). Residues R301, R320, and R325 each coordinate DNA.

Belongs to the RuvB family. As to quaternary structure, homohexamer. Forms an RuvA(8)-RuvB(12)-Holliday junction (HJ) complex. HJ DNA is sandwiched between 2 RuvA tetramers; dsDNA enters through RuvA and exits via RuvB. An RuvB hexamer assembles on each DNA strand where it exits the tetramer. Each RuvB hexamer is contacted by two RuvA subunits (via domain III) on 2 adjacent RuvB subunits; this complex drives branch migration. In the full resolvosome a probable DNA-RuvA(4)-RuvB(12)-RuvC(2) complex forms which resolves the HJ.

It is found in the cytoplasm. The catalysed reaction is ATP + H2O = ADP + phosphate + H(+). Its function is as follows. The RuvA-RuvB-RuvC complex processes Holliday junction (HJ) DNA during genetic recombination and DNA repair, while the RuvA-RuvB complex plays an important role in the rescue of blocked DNA replication forks via replication fork reversal (RFR). RuvA specifically binds to HJ cruciform DNA, conferring on it an open structure. The RuvB hexamer acts as an ATP-dependent pump, pulling dsDNA into and through the RuvAB complex. RuvB forms 2 homohexamers on either side of HJ DNA bound by 1 or 2 RuvA tetramers; 4 subunits per hexamer contact DNA at a time. Coordinated motions by a converter formed by DNA-disengaged RuvB subunits stimulates ATP hydrolysis and nucleotide exchange. Immobilization of the converter enables RuvB to convert the ATP-contained energy into a lever motion, pulling 2 nucleotides of DNA out of the RuvA tetramer per ATP hydrolyzed, thus driving DNA branch migration. The RuvB motors rotate together with the DNA substrate, which together with the progressing nucleotide cycle form the mechanistic basis for DNA recombination by continuous HJ branch migration. Branch migration allows RuvC to scan DNA until it finds its consensus sequence, where it cleaves and resolves cruciform DNA. This is Holliday junction branch migration complex subunit RuvB from Burkholderia cenocepacia (strain HI2424).